Consider the following 268-residue polypeptide: Glucosamine-6-phosphate deaminase (268 aa).

The active-site Proton acceptor; for enolization step is the D67. N136 (for ring-opening step) is an active-site residue. Residue H138 is the Proton acceptor; for ring-opening step of the active site. The For ring-opening step role is filled by E143.

It belongs to the glucosamine/galactosamine-6-phosphate isomerase family. NagB subfamily. In terms of assembly, homohexamer.

The enzyme catalyses alpha-D-glucosamine 6-phosphate + H2O = beta-D-fructose 6-phosphate + NH4(+). It functions in the pathway amino-sugar metabolism; N-acetylneuraminate degradation; D-fructose 6-phosphate from N-acetylneuraminate: step 5/5. Functionally, catalyzes the reversible isomerization-deamination of glucosamine 6-phosphate (GlcN6P) to form fructose 6-phosphate (Fru6P) and ammonium ion. This chain is Glucosamine-6-phosphate deaminase, found in Shewanella loihica (strain ATCC BAA-1088 / PV-4).